We begin with the raw amino-acid sequence, 662 residues long: Probable conjugal transfer protein TrbE part 2 (662 aa).

307-314 contacts ATP; that stretch reads GPTGSGKS.

Belongs to the TrbE/VirB4 family.

The chain is Probable conjugal transfer protein TrbE part 2 (trbEB) from Sinorhizobium fredii (strain NBRC 101917 / NGR234).